Reading from the N-terminus, the 37-residue chain is MKVRASVRKICKDCRLIRRKRRVMVICSNPKHKQRQG.

It belongs to the bacterial ribosomal protein bL36 family.

The protein resides in the plastid. The protein localises to the chloroplast. This is Large ribosomal subunit protein bL36c from Oltmannsiellopsis viridis (Marine flagellate).